The following is a 2228-amino-acid chain: Genome polyprotein (2228 aa).

Residues 56 to 76 (AEVGAHQSEPLKTSVDKPGSK) form a disordered region. Short sequence motifs ((L)YPX(n)L motif) lie at residues 167–171 (YPHGL) and 200–205 (YPVWEL). The interval 766-836 (MLDRIALGDL…PRKIKGVFSQ (71 aa)) is involved in P1-2A pentamerization. The chain crosses the membrane as a helical span at residues 1011-1031 (TVEIINTVLCFVKSGILLYVI). The interval 1043-1070 (IGLLRVMNYADIGCSVISCGKVFSKMLE) is membrane-penetrating ability. Positions 1127 to 1152 (NKKDVLNILKDNQQKIERAIEEADNF) form a coiled coil. The SF3 helicase domain maps to 1204 to 1366 (HQKLKNLGSI…SFFKNPHNDM (163 aa)). ATP is bound at residue 1230-1237 (GKRGGGKS). Residues 1462 to 1482 (WVAVGAAVGVLGVLVGGWYVY) form a helical membrane-spanning segment. Y1499 is subject to O-(5'-phospho-RNA)-tyrosine. The region spanning 1514–1728 (DPVESQSTLE…VAKLVTQEMF (215 aa)) is the Peptidase C3 domain. Active-site for protease 3C activity residues include H1563, D1603, and C1691. The 122-residue stretch at 1977–2098 (DVGLDLDFSA…VFSRQVQFDN (122 aa)) folds into the RdRp catalytic domain.

It belongs to the picornaviridae polyprotein family. In terms of assembly, homodimer. Homomultimer; probably interacts with membranes in a multimeric form. Seems to assemble into amyloid-like fibers. As to quaternary structure, homodimer. Monomer. Interacts with protein 3CD. Interacts with host ACBD3. In terms of assembly, interacts with protein 3AB. As to quaternary structure, interacts with human MAVS. Homodimer; disulfide-linked. In terms of assembly, homopentamer. Homooligomer. As to quaternary structure, interacts with capsid protein VP2. Interacts with capsid protein VP3. Interacts with capsid protein VP1. Interacts with capsid protein VP3. In terms of assembly, interacts with capsid protein VP1. Interacts with capsid protein VP2. Specific enzymatic cleavages by viral protease in vivo yield a variety of precursors and mature proteins. Polyprotein processing intermediates are produced, such as P1-2A which is a functional precursor of the structural proteins, VP0 which is a VP4-VP2 precursor, VP1-2A precursor, 3ABC precursor which is a stable and catalytically active precursor of 3A, 3B and 3C proteins, 3AB and 3CD precursors. The assembly signal 2A is removed from VP1-2A by a host protease, possibly host Cathepsin L. This cleavage occurs over a region of 3 amino-acids probably generating VP1 proteins with heterogeneous C-termini. Post-translationally, during virion maturation, immature virions are rendered infectious following cleavage of VP0 into VP4 and VP2. This maturation seems to be an autocatalytic event triggered by the presence of RNA in the capsid and is followed by a conformational change of the particle. In terms of processing, the assembly signal 2A is removed from VP1-2A by a host protease, possibly host Cathepsin L in naked virions. This cleavage does not occur in enveloped virions. This cleavage occurs over a region of 3 amino-acids probably generating VP1 proteins with heterogeneous C-termini. VPg is uridylylated prior to priming replication into VPg-pUpU. Post-translationally, unlike other picornaviruses, does not seem to be myristoylated.

The protein localises to the virion. Its subcellular location is the host endosome. It localises to the host multivesicular body. The protein resides in the host membrane. It is found in the host mitochondrion outer membrane. The protein localises to the host cytoplasm. Its subcellular location is the host cytoplasmic vesicle membrane. The catalysed reaction is RNA(n) + a ribonucleoside 5'-triphosphate = RNA(n+1) + diphosphate. The enzyme catalyses a ribonucleoside 5'-triphosphate + H2O = a ribonucleoside 5'-diphosphate + phosphate + H(+). It carries out the reaction Selective cleavage of Gln-|-Gly bond in the poliovirus polyprotein. In other picornavirus reactions Glu may be substituted for Gln, and Ser or Thr for Gly.. Its function is as follows. Capsid proteins VP1, VP2, and VP3 form a closed capsid enclosing the viral positive strand RNA genome. All these proteins contain a beta-sheet structure called beta-barrel jelly roll. Together they form an icosahedral capsid (T=3) composed of 60 copies of each VP1, VP2, and VP3, with a diameter of approximately 300 Angstroms. VP1 is situated at the 12 fivefold axes, whereas VP2 and VP3 are located at the quasi-sixfold axes. The naked capsid interacts with the host receptor HAVCR1 to provide virion attachment to and probably entry into the target cell. VP0 precursor is a component of the immature procapsids. In terms of biological role, plays a role in the assembly of the 12 pentamers into an icosahedral structure. Has not been detected in mature virions, supposedly owing to its small size. Functionally, precursor component of immature procapsids that corresponds to an extended form of the structural protein VP1. After maturation, possibly by the host Cathepsin L, the assembly signal 2A is cleaved to give rise to the mature VP1 protein. Its function is as follows. Functions as a viroporin. Affects membrane integrity and causes an increase in membrane permeability. Involved in host intracellular membrane rearrangements probably to give rise to the viral factories. Does not disrupt calcium homeostasis or glycoprotein trafficking. Antagonizes the innate immune response of the host by suppressing IFN-beta synthesis, which it achieves by interfering with the RIG-I/IFIH1 pathway. Affects membrane integrity and causes an increase in membrane permeability. In terms of biological role, associates with and induces structural rearrangements of intracellular membranes. Displays RNA-binding activity. Functionally, the precursor 3ABC is targeted to the mitochondrial membrane where protease 3C activity cleaves and inhibits the host antiviral protein MAVS, thereby disrupting activation of IRF3 through the IFIH1/MDA5 pathway. In vivo, the protease activity of 3ABC precursor is more efficient in cleaving the 2BC precursor than that of protein 3C. The 3ABC precursor may therefore play a role in the proteolytic processing of the polyprotein. Possible viroporin. Its function is as follows. Interacts with the 3CD precursor and with RNA structures found at both the 5'- and 3'-termini of the viral genome. Since the 3AB precursor contains the hydrophobic domain 3A, it probably anchors the whole viral replicase complex to intracellular membranes on which viral RNA synthesis occurs. May serve as membrane anchor to the 3AB and 3ABC precursors via its hydrophobic domain. May interact with RNA. In terms of biological role, acts as a primer for viral RNA replication and remains covalently bound to viral genomic RNA. VPg is uridylylated prior to priming replication into VPg-pUpU. The VPg-pUpU is then used as primer on the genomic RNA poly(A) by the RNA-dependent RNA polymerase to replicate the viral genome. Functionally, cysteine protease that generates mature viral proteins from the precursor polyprotein. In addition to its proteolytic activity, it binds to viral RNA, and thus influences viral genome replication. RNA and substrate bind cooperatively to the protease. Cleaves IKBKG/NEMO to impair innate immune signaling. Cleaves host PABPC1 which may participate in the switch of viral translation to RNA synthesis. Its function is as follows. Interacts with the 3AB precursor and with RNA structures found at both the 5'- and 3'-termini of the viral genome. Disrupts TLR3 signaling by degrading the host adapter protein TICAM1/TRIF. RNA-directed RNA polymerase 3D-POL replicates genomic and antigenomic RNA by recognizing replications specific signals. The protein is Genome polyprotein of Cercopithecus hamlyni (Owl-faced monkey).